Reading from the N-terminus, the 595-residue chain is Torsin-1A-interacting protein 1 (595 aa).

Positions 1 to 221 are disordered; it reads MAGERWQAEG…GNTKTNEREA (221 aa). The Nuclear segment spans residues 1–351; the sequence is MAGERWQAEG…NEPSVKIKWW (351 aa). Basic and acidic residues predominate over residues 24–38; sequence PIREGRRRLDPRNGD. A Phosphoserine modification is found at Ser-60. 2 stretches are compositionally biased toward basic and acidic residues: residues 70 to 101 and 115 to 132; these read FEPR…EVRE and RAQE…RLEQ. Over residues 133-143 the composition is skewed to polar residues; the sequence is HSQQPQLSPAT. Ser-134, Ser-140, Ser-151, Ser-153, Ser-154, and Ser-155 each carry phosphoserine. A compositionally biased stretch (polar residues) spans 204 to 215; that stretch reads LDSTYQTNGNTK. Thr-235 is modified (phosphothreonine). Phosphoserine occurs at positions 241, 244, and 255. Disordered regions lie at residues 250–286 and 319–340; these read ARSS…PAHE and IQKS…AIHH. Residues 251 to 262 show a composition bias toward basic and acidic residues; it reads RSSDSLESRDEA. Residues 319 to 335 show a composition bias toward polar residues; that stretch reads IQKSNFGNQSPSTSRPQ. Lys-321 participates in a covalent cross-link: Glycyl lysine isopeptide (Lys-Gly) (interchain with G-Cter in SUMO2). Residue Ser-328 is modified to Phosphoserine. A helical transmembrane segment spans residues 352 to 372; sequence LLGLVAILAVGLFWFFHTPAV. The interval 368-595 is interaction with TOR1A; sequence HTPAVETTAV…ENTLKAGSCL (228 aa). Residues 373 to 400 are a coiled coil; that stretch reads ETTAVQEFQNQMKQLQSKYQSQNEKLWK. At 373–595 the chain is on the perinuclear space side; sequence ETTAVQEFQN…ENTLKAGSCL (223 aa). Residue Asn-411 is glycosylated (N-linked (GlcNAc...) asparagine).

Belongs to the TOR1AIP family. In terms of assembly, interacts with ATP1B4. Interacts with TOR1A (ATP-bound). Interacts with TOR1B, TOR2A and TOR3A. Interacts with VIM. In terms of tissue distribution, expressed in the spinal cord and liver (at protein level).

Its subcellular location is the nucleus inner membrane. Its function is as follows. Required for nuclear membrane integrity. Induces TOR1A and TOR1B ATPase activity and is required for their location on the nuclear membrane. Binds to A- and B-type lamins. Possible role in membrane attachment and assembly of the nuclear lamina. The chain is Torsin-1A-interacting protein 1 (Tor1aip1) from Mus musculus (Mouse).